The sequence spans 20 residues: Insulin-like growth factor-binding protein 2 (20 aa).

The IGFBP N-terminal domain occupies 2-20 (LVFYCPKCTAERQTACPKL).

In terms of assembly, binds IGF2 more than IGF1. In terms of processing, N-glycosylated.

The protein resides in the secreted. In terms of biological role, inhibits IGF-mediated growth and developmental rates. IGF-binding proteins prolong the half-life of the IGFs and have been shown to either inhibit or stimulate the growth promoting effects of the IGFs on cell culture. They alter the interaction of IGFs with their cell surface receptors. This is Insulin-like growth factor-binding protein 2 (igfbp2) from Oncorhynchus tshawytscha (Chinook salmon).